Here is a 96-residue protein sequence, read N- to C-terminus: Co-chaperonin GroES (96 aa).

This sequence belongs to the GroES chaperonin family. In terms of assembly, heptamer of 7 subunits arranged in a ring. Interacts with the chaperonin GroEL.

The protein resides in the cytoplasm. In terms of biological role, together with the chaperonin GroEL, plays an essential role in assisting protein folding. The GroEL-GroES system forms a nano-cage that allows encapsulation of the non-native substrate proteins and provides a physical environment optimized to promote and accelerate protein folding. GroES binds to the apical surface of the GroEL ring, thereby capping the opening of the GroEL channel. The sequence is that of Co-chaperonin GroES from Actinobacillus pleuropneumoniae serotype 3 (strain JL03).